The primary structure comprises 400 residues: Hyaluronidase (400 aa).

Positions 1 to 19 are cleaved as a signal peptide; sequence MQTILVLTTFLSAWFLAVG. Disulfide bonds link cysteine 31/cysteine 319, cysteine 196/cysteine 209, cysteine 344/cysteine 355, cysteine 349/cysteine 384, and cysteine 386/cysteine 395. Glutamate 120 acts as the Proton donor in catalysis. Residues asparagine 129 and asparagine 166 are each glycosylated (N-linked (GlcNAc...) asparagine). Asparagine 243 and asparagine 275 each carry an N-linked (GlcNAc...) asparagine glycan. The region spanning 340–396 is the EGF-like domain; sequence NVARCSKQACSGRGRCTWPKDTSVIAWKFLVEKEDYDFYLGDIECKCVEGYEGRYCE.

Belongs to the glycosyl hydrolase 56 family. In terms of assembly, monomer. In terms of tissue distribution, expressed by the venom gland.

It is found in the secreted. The enzyme catalyses Random hydrolysis of (1-&gt;4)-linkages between N-acetyl-beta-D-glucosamine and D-glucuronate residues in hyaluronate.. Functionally, spider venom endo-hyaluronidase that is able to degrade purified hyaluronic acid (HA) and chondroitin sulfate (CS). Has no activity on dermatan sulfate (DS) and heparan sulfate (HS). Also increases the dermonecrotic effect of the dermonecrotic toxin (AC P0CE80), when injected in rabbit skin, supporting the hypothesis that venom hyaluronidases are spreading factors. The sequence is that of Hyaluronidase from Loxosceles intermedia (Brown spider).